The chain runs to 368 residues: SH3 domain-containing protein 2 (368 aa).

2 coiled-coil regions span residues 1-21 (MDAI…QQQA) and 146-210 (LEDA…LGKE). The BAR domain maps to 1–264 (MDAIRKQASR…MVSERQRIEA (264 aa)). A disordered region spans residues 258-281 (ERQRIEAPSTPSSADSMPPPPSYE). One can recognise an SH3 domain in the interval 299 to 358 (MGYFLGEVLFPYHGVTDVELSLSTGEYVVVRKVTGSGWAEGECKGKAGWFPYGYIERRER).

Homodimer. Interacts with FREE1. Interacts (via SH3 domain) with ATG8E and ATG8F. Component of a phosphoinositide 3-kinase (PI3K) complex containing ATG6, SH3P2 and FREE1. Binds to SH3P3 and DRP1A. Forms a complex made of SH3P2 and DRP1A and triggers its accumulation at the cell plate. Highly expressed in seedlings. Detected in flowers, leaves and stems.

Its subcellular location is the cytoplasm. It localises to the cytoplasmic vesicle. It is found in the clathrin-coated vesicle. The protein localises to the cell membrane. The protein resides in the late endosome. Its subcellular location is the autophagosome membrane. Functionally, regulator for autophaosome formation and/or maturation. Binds phosphatidylinositol-phosphate; highest affinity for vesicles containing PtdIns(3,4,5)P(3), followed by those containing PtdIns(4,5)P(2) and PtdIns(3,4)P(2), with minimal binding to phosphatidylinositol monophosphates, including PtdIns(3)P. Together with DRP1A, converts the fused vesicles to tubular structures at the cell plate during cytokinesis. In Arabidopsis thaliana (Mouse-ear cress), this protein is SH3 domain-containing protein 2.